A 219-amino-acid polypeptide reads, in one-letter code: 7-carboxy-7-deazaguanine synthase (219 aa).

Residues 22–24 and Arg37 contribute to the substrate site; that span reads IQG. The 192-residue stretch at 28-219 folds into the Radical SAM core domain; it reads LVGLPSVFIR…PQVHKCFDLK (192 aa). [4Fe-4S] cluster contacts are provided by Cys41, Cys45, and Cys48. Thr81 contributes to the substrate binding site. S-adenosyl-L-methionine is bound by residues Gly83 and 130-132; that span reads SPK.

The protein belongs to the radical SAM superfamily. 7-carboxy-7-deazaguanine synthase family. In terms of assembly, homodimer. [4Fe-4S] cluster serves as cofactor. S-adenosyl-L-methionine is required as a cofactor. The cofactor is Mg(2+).

It catalyses the reaction 6-carboxy-5,6,7,8-tetrahydropterin + H(+) = 7-carboxy-7-deazaguanine + NH4(+). Its pathway is purine metabolism; 7-cyano-7-deazaguanine biosynthesis. Its function is as follows. Catalyzes the complex heterocyclic radical-mediated conversion of 6-carboxy-5,6,7,8-tetrahydropterin (CPH4) to 7-carboxy-7-deazaguanine (CDG), a step common to the biosynthetic pathways of all 7-deazapurine-containing compounds. This chain is 7-carboxy-7-deazaguanine synthase, found in Aquifex aeolicus (strain VF5).